The chain runs to 152 residues: Large ribosomal subunit protein bL34c (152 aa).

The N-terminal 91 residues, 1–91 (MATLSLLSTG…DRCRRFVVRA (91 aa)), are a transit peptide targeting the chloroplast.

Component of the chloroplast large ribosomal subunit (LSU). Mature 70S chloroplast ribosomes of higher plants consist of a small (30S) and a large (50S) subunit. The 30S small subunit contains 1 molecule of ribosomal RNA (16S rRNA) and 24 different proteins. The 50S large subunit contains 3 rRNA molecules (23S, 5S and 4.5S rRNA) and 33 different proteins.

The protein resides in the plastid. It is found in the chloroplast. Functionally, component of the chloroplast ribosome (chloro-ribosome), a dedicated translation machinery responsible for the synthesis of chloroplast genome-encoded proteins, including proteins of the transcription and translation machinery and components of the photosynthetic apparatus. This is Large ribosomal subunit protein bL34c (RPL34) from Spinacia oleracea (Spinach).